We begin with the raw amino-acid sequence, 87 residues long: Small ribosomal subunit protein uS15 (87 aa).

Residues 1–19 (MDKAKKQELMAKHARHEGD) are compositionally biased toward basic and acidic residues. Positions 1-23 (MDKAKKQELMAKHARHEGDTGSP) are disordered.

Belongs to the universal ribosomal protein uS15 family. Part of the 30S ribosomal subunit. Forms a bridge to the 50S subunit in the 70S ribosome, contacting the 23S rRNA.

One of the primary rRNA binding proteins, it binds directly to 16S rRNA where it helps nucleate assembly of the platform of the 30S subunit by binding and bridging several RNA helices of the 16S rRNA. Functionally, forms an intersubunit bridge (bridge B4) with the 23S rRNA of the 50S subunit in the ribosome. This chain is Small ribosomal subunit protein uS15, found in Clostridium botulinum (strain Loch Maree / Type A3).